Here is a 377-residue protein sequence, read N- to C-terminus: Homoserine O-succinyltransferase (377 aa).

In terms of domain architecture, AB hydrolase-1 spans 50-358 (NAILVCHALS…PSTYGHDSFL (309 aa)). The Nucleophile role is filled by serine 156. Arginine 226 provides a ligand contact to substrate. Catalysis depends on residues aspartate 321 and histidine 354. Aspartate 355 is a binding site for substrate.

This sequence belongs to the AB hydrolase superfamily. MetX family. In terms of assembly, homodimer.

The protein localises to the cytoplasm. The catalysed reaction is L-homoserine + succinyl-CoA = O-succinyl-L-homoserine + CoA. Its pathway is amino-acid biosynthesis; L-methionine biosynthesis via de novo pathway; O-succinyl-L-homoserine from L-homoserine: step 1/1. Functionally, transfers a succinyl group from succinyl-CoA to L-homoserine, forming succinyl-L-homoserine. The sequence is that of Homoserine O-succinyltransferase from Nitrosomonas eutropha (strain DSM 101675 / C91 / Nm57).